A 363-amino-acid chain; its full sequence is 3,4-dihydroxy-2-butanone 4-phosphate synthase (363 aa).

The interval methionine 1–arginine 202 is DHBP synthase. D-ribulose 5-phosphate is bound by residues arginine 28–glutamate 29, aspartate 33, arginine 141–threonine 145, and glutamate 165. Glutamate 29 provides a ligand contact to Mg(2+). Residue histidine 144 coordinates Mg(2+). A GTP cyclohydrolase II-like region spans residues serine 205 to lysine 363.

The protein in the N-terminal section; belongs to the DHBP synthase family. It in the C-terminal section; belongs to the GTP cyclohydrolase II family. Mg(2+) serves as cofactor. It depends on Mn(2+) as a cofactor.

The enzyme catalyses D-ribulose 5-phosphate = (2S)-2-hydroxy-3-oxobutyl phosphate + formate + H(+). Its pathway is cofactor biosynthesis; riboflavin biosynthesis; 2-hydroxy-3-oxobutyl phosphate from D-ribulose 5-phosphate: step 1/1. In terms of biological role, catalyzes the conversion of D-ribulose 5-phosphate to formate and 3,4-dihydroxy-2-butanone 4-phosphate. The chain is 3,4-dihydroxy-2-butanone 4-phosphate synthase (ribB) from Neisseria meningitidis serogroup B (strain ATCC BAA-335 / MC58).